Consider the following 547-residue polypeptide: Chaperonin GroEL (547 aa).

ATP is bound by residues 30-33, lysine 51, 87-91, glycine 415, 479-481, and aspartate 495; these read TLGP, DGTTT, and NAA.

This sequence belongs to the chaperonin (HSP60) family. As to quaternary structure, forms a cylinder of 14 subunits composed of two heptameric rings stacked back-to-back. Interacts with the co-chaperonin GroES.

It is found in the cytoplasm. It carries out the reaction ATP + H2O + a folded polypeptide = ADP + phosphate + an unfolded polypeptide.. Together with its co-chaperonin GroES, plays an essential role in assisting protein folding. The GroEL-GroES system forms a nano-cage that allows encapsulation of the non-native substrate proteins and provides a physical environment optimized to promote and accelerate protein folding. The polypeptide is Chaperonin GroEL (Enterobacter sp. (strain 638)).